Here is a 376-residue protein sequence, read N- to C-terminus: PCM7-4 (376 aa).

Functionally, has antibacterial activity against Listeria monocytogenes. In Bacillus velezensis, this protein is PCM7-4.